The sequence spans 317 residues: Acetyl-coenzyme A carboxylase carboxyl transferase subunit alpha (317 aa).

A CoA carboxyltransferase C-terminal domain is found at 40-293 (LEKRSADALK…GDIIAASLRS (254 aa)).

The protein belongs to the AccA family. As to quaternary structure, acetyl-CoA carboxylase is a heterohexamer composed of biotin carboxyl carrier protein (AccB), biotin carboxylase (AccC) and two subunits each of ACCase subunit alpha (AccA) and ACCase subunit beta (AccD).

Its subcellular location is the cytoplasm. The enzyme catalyses N(6)-carboxybiotinyl-L-lysyl-[protein] + acetyl-CoA = N(6)-biotinyl-L-lysyl-[protein] + malonyl-CoA. Its pathway is lipid metabolism; malonyl-CoA biosynthesis; malonyl-CoA from acetyl-CoA: step 1/1. Component of the acetyl coenzyme A carboxylase (ACC) complex. First, biotin carboxylase catalyzes the carboxylation of biotin on its carrier protein (BCCP) and then the CO(2) group is transferred by the carboxyltransferase to acetyl-CoA to form malonyl-CoA. The sequence is that of Acetyl-coenzyme A carboxylase carboxyl transferase subunit alpha from Brucella abortus (strain S19).